Consider the following 241-residue polypeptide: Uridylate kinase (241 aa).

12-15 is an ATP binding site; sequence KLSG. Positions 20–25 are involved in allosteric activation by GTP; that stretch reads GATGYG. G54 contributes to the UMP binding site. 2 residues coordinate ATP: G55 and R59. UMP-binding positions include D74 and 135–142; that span reads TGNPYMTT. ATP-binding residues include N163, Y169, and D172.

The protein belongs to the UMP kinase family. In terms of assembly, homohexamer.

It localises to the cytoplasm. The enzyme catalyses UMP + ATP = UDP + ADP. It participates in pyrimidine metabolism; CTP biosynthesis via de novo pathway; UDP from UMP (UMPK route): step 1/1. With respect to regulation, allosterically activated by GTP. Inhibited by UTP. In terms of biological role, catalyzes the reversible phosphorylation of UMP to UDP. The chain is Uridylate kinase from Dehalococcoides mccartyi (strain CBDB1).